A 581-amino-acid polypeptide reads, in one-letter code: Proline--tRNA ligase (581 aa).

This sequence belongs to the class-II aminoacyl-tRNA synthetase family. ProS type 1 subfamily. As to quaternary structure, homodimer.

It is found in the cytoplasm. The enzyme catalyses tRNA(Pro) + L-proline + ATP = L-prolyl-tRNA(Pro) + AMP + diphosphate. Its function is as follows. Catalyzes the attachment of proline to tRNA(Pro) in a two-step reaction: proline is first activated by ATP to form Pro-AMP and then transferred to the acceptor end of tRNA(Pro). As ProRS can inadvertently accommodate and process non-cognate amino acids such as alanine and cysteine, to avoid such errors it has two additional distinct editing activities against alanine. One activity is designated as 'pretransfer' editing and involves the tRNA(Pro)-independent hydrolysis of activated Ala-AMP. The other activity is designated 'posttransfer' editing and involves deacylation of mischarged Ala-tRNA(Pro). The misacylated Cys-tRNA(Pro) is not edited by ProRS. This Kosmotoga olearia (strain ATCC BAA-1733 / DSM 21960 / TBF 19.5.1) protein is Proline--tRNA ligase.